Consider the following 390-residue polypeptide: Homeobox protein Hox-B2a (390 aa).

Disordered stretches follow at residues Ser40–Asn73, Thr81–Leu100, Lys108–Val155, and Met211–Asp338. Positions Pro52 to Asn73 are enriched in polar residues. Positions Glu103–Lys108 match the Antp-type hexapeptide motif. Residues Lys118–Ser135 show a composition bias toward low complexity. Positions Ser158–Thr217 form a DNA-binding region, homeobox. Over residues Ser244–Glu262 the composition is skewed to low complexity. Over residues Thr263–Glu290 the composition is skewed to polar residues.

It belongs to the Antp homeobox family. Proboscipedia subfamily.

The protein resides in the nucleus. Its function is as follows. Sequence-specific transcription factor which is part of a developmental regulatory system that provides cells with specific positional identities on the anterior-posterior axis. Plays an important role in the patterning of hindbrain and pharyngeal arches. The polypeptide is Homeobox protein Hox-B2a (hoxb2a) (Danio rerio (Zebrafish)).